A 257-amino-acid polypeptide reads, in one-letter code: Outer dense fiber protein 4 (257 aa).

The interval 1 to 41 (MDAEYSGNEFPRSEGERDQHQRPGKERKSGEAGWGTGELGQ) is disordered. Basic and acidic residues predominate over residues 11–30 (PRSEGERDQHQRPGKERKSG). Ser-64 is modified (phosphoserine). 3 consecutive transmembrane segments (helical) span residues 80 to 100 (AQVL…VVAF), 152 to 172 (VTFI…FELE), and 179 to 199 (IGWS…CAIL).

As to expression, expressed in testis and sperm; especially localized to sperm tail (at protein level).

The protein resides in the membrane. In terms of biological role, component of the outer dense fibers (ODF) of spermatozoa which could be involved in sperm tail structure, sperm movement and general organization of cellular cytoskeleton. The polypeptide is Outer dense fiber protein 4 (ODF4) (Homo sapiens (Human)).